The following is a 61-amino-acid chain: UPF0370 protein Spro_3503 (61 aa).

A helical membrane pass occupies residues Trp3–Ile23. Residues Lys38–Asn48 are compositionally biased toward basic and acidic residues. The interval Lys38–Lys61 is disordered. Residues Ala49–Lys61 are compositionally biased toward acidic residues.

The protein belongs to the UPF0370 family.

The protein resides in the cell membrane. In Serratia proteamaculans (strain 568), this protein is UPF0370 protein Spro_3503.